Reading from the N-terminus, the 87-residue chain is Toxin Cll4 (87 aa).

The N-terminal stretch at 1 to 19 (MNSLLMITACLALIGTVWA) is a signal peptide. The 66-residue stretch at 20–85 (KEGYIVNYHD…VWPLPKKRCN (66 aa)) folds into the LCN-type CS-alpha/beta domain. 4 disulfide bridges follow: C31/C84, C35/C60, C44/C65, and C48/C67. N85 carries the asparagine amide modification.

Belongs to the long (4 C-C) scorpion toxin superfamily. Sodium channel inhibitor family. Beta subfamily. In terms of tissue distribution, expressed by the venom gland.

Its subcellular location is the secreted. Its function is as follows. Beta toxins bind voltage-independently at site-4 of sodium channels (Nav) and shift the voltage of activation toward more negative potentials thereby affecting sodium channel activation and promoting spontaneous and repetitive firing. This Centruroides limpidus (Mexican scorpion) protein is Toxin Cll4.